Here is a 175-residue protein sequence, read N- to C-terminus: MTLILGIDPGSRITGYGIVRDTGRGGCIYVASGCIRTGAGELHERLQIVYRGVREIIQTYGPVTMGIEKVFMAKNADSALKLGQARGAAIVAGAEESLEIAEYTATQVKQAVVGTGAANKEQVQMMVMHMLKLTSKPQIDASDALAIAICHAHTRSSLLPHGLGTARSRGGRLRL.

Active-site residues include Asp8, Glu68, and Asp140. 3 residues coordinate Mg(2+): Asp8, Glu68, and Asp140.

It belongs to the RuvC family. Homodimer which binds Holliday junction (HJ) DNA. The HJ becomes 2-fold symmetrical on binding to RuvC with unstacked arms; it has a different conformation from HJ DNA in complex with RuvA. In the full resolvosome a probable DNA-RuvA(4)-RuvB(12)-RuvC(2) complex forms which resolves the HJ. It depends on Mg(2+) as a cofactor.

The protein resides in the cytoplasm. It carries out the reaction Endonucleolytic cleavage at a junction such as a reciprocal single-stranded crossover between two homologous DNA duplexes (Holliday junction).. The RuvA-RuvB-RuvC complex processes Holliday junction (HJ) DNA during genetic recombination and DNA repair. Endonuclease that resolves HJ intermediates. Cleaves cruciform DNA by making single-stranded nicks across the HJ at symmetrical positions within the homologous arms, yielding a 5'-phosphate and a 3'-hydroxyl group; requires a central core of homology in the junction. The consensus cleavage sequence is 5'-(A/T)TT(C/G)-3'. Cleavage occurs on the 3'-side of the TT dinucleotide at the point of strand exchange. HJ branch migration catalyzed by RuvA-RuvB allows RuvC to scan DNA until it finds its consensus sequence, where it cleaves and resolves the cruciform DNA. The polypeptide is Crossover junction endodeoxyribonuclease RuvC (Pseudomonas fluorescens (strain Pf0-1)).